The sequence spans 816 residues: MNIESEKEQFLKEFGSYYGYANSPKNIDEIRATEFKRLNDTVYLDHAGATLYSESQMEAVFKDLNSTLYGNPHSQSTCSLATEDIVGKARQQVLSFFNASPREYSCIFTSGATAALKLVGETFPWSSNSSFMYSMENHNSVLGIREYALSKGAAAFAVDIEDTHVGESESPQSNLKLTQHHIQRRNEGGVLKEGMTGNTYNLFAFPSECNFSGRKFDPNLIKIIKEGSERILESSQYSRGCWLVLIDAAKGCATNPPNLSMFKADFVVFSFYKLFGYPTGLGALIVRKDAAKLMKKTYFSGGTVTAAIADVDFFKRREGVEEFFEDGTISFLSITAIQHGFKIINMLTTSSIFRHTTSIAAYVRNKLLALKHENGEFVCTLYGLLSSEMGPTVSFNMKRPDGTWYGYREVEKLATLAGIQLRTGCFCNPGACAKYLGLSHLDLLSNIEAGHVCWDDRDILHGKPTGAVRVSFGYMSTFEDAMKFVNFVESNFVISSFNRCALQPRSISLPIEGIAEAAARHFLTSITVYPIKSCAGFSVDQWPLTSTGLLHDREWILKSTTGEILTQKKVPEMCYISTLIDLNLGKLFVESPRCKEKLQIELKSSSLVTERDEMDIQNHRYEVTSYNNEVDIWFSRAIDRPCTLLRNSDSQSHSCINKNGSPGMCRDVGARLNFVNEAQFLLISEESIKDLNSRLKSNGRRRNGGQAVQVGVMRFRPNLVASSGEPYAEDGWSNINIGGKYFMSLGGCNRCQMININPEAGEVQRFTEPLATLAGYRRAKGKIMFGILLRYENNTKTESDTWIRVGEEIIPNGDRH.

K273 bears the N6-(pyridoxal phosphate)lysine mark. C427 is a catalytic residue. In terms of domain architecture, MOSC spans 647-812 (NSDSQSHSCI…IRVGEEIIPN (166 aa)).

It belongs to the class-V pyridoxal-phosphate-dependent aminotransferase family. MOCOS subfamily. Requires pyridoxal 5'-phosphate as cofactor. In terms of tissue distribution, ubiquitously expressed.

It carries out the reaction Mo-molybdopterin + L-cysteine + AH2 = thio-Mo-molybdopterin + L-alanine + A + H2O. It functions in the pathway cofactor biosynthesis; molybdopterin biosynthesis. In terms of biological role, sulfurates the molybdenum cofactor. Sulfation of molybdenum is essential for xanthine dehydrogenase (XDH) and aldehyde oxidase (ADO) enzymes in which molybdenum cofactor is liganded by 1 oxygen and 1 sulfur atom in active form. This Solanum lycopersicum (Tomato) protein is Molybdenum cofactor sulfurase (FLACCA).